The sequence spans 423 residues: MLSFVKKSIALVAALQAVTALATPISSEAGVEKRGSGFANAVYFTNWGIYGRNFQPADLPASEITHVLYSFMNVRADGTIFSGDTYADYEKHYAGDSWNDVGTNAYGCVKQLYLLKKQNRNMKVMLSIGGWTWSTNFPAAASSAATRKTFAQSAVGFMKDWGFDGIDIDWEYPADATQAQNMVLLLQAVRSELDSYAAQYAKGHHFLLSIAAPAGPDNYNKLKFAELGKVLDYINLMAYDYAGSWSNYTGHDANIYANPQNPNATPYNTDDAVQAYINGGVPANKIVLGMPIYGRSFQQTEGIGKPYNGIGSGSWENGIWDYKALPKAGATVKCDDTAKGCYSYDPSTKELISFDTPAMISTKVSWLKGKGLGGTMFWEASASKKGSDSLISTSHQGLGSQDSTQNYLDYPNSKYDNIKKGMN.

The first 22 residues, 1 to 22 (MLSFVKKSIALVAALQAVTALA), serve as a signal peptide directing secretion. Positions 23–34 (TPISSEAGVEKR) are excised as a propeptide. One can recognise a GH18 domain in the interval 38–401 (FANAVYFTNW…STSHQGLGSQ (364 aa)). Chitin-binding positions include 102–103 (GT) and 129–132 (GGWT). Glu171 (proton donor) is an active-site residue. Chitin-binding positions include Tyr172, 237–240 (MAYD), and Trp378.

The protein belongs to the glycosyl hydrolase 18 family. Chitinase class V subfamily.

It localises to the secreted. The catalysed reaction is Random endo-hydrolysis of N-acetyl-beta-D-glucosaminide (1-&gt;4)-beta-linkages in chitin and chitodextrins.. The protein is Chitinase 1 (CHI1) of Aphanocladium album (Wheat rust fungus).